The following is a 673-amino-acid chain: DNA ligase (673 aa).

Residues Asp-33–Asp-37, Ser-82–Leu-83, and Glu-113 contribute to the NAD(+) site. Lys-115 (N6-AMP-lysine intermediate) is an active-site residue. Positions 136, 170, 285, and 309 each coordinate NAD(+). The Zn(2+) site is built by Cys-403, Cys-406, Cys-421, and Cys-426. The BRCT domain maps to Ala-583 to Met-672.

This sequence belongs to the NAD-dependent DNA ligase family. LigA subfamily. Requires Mg(2+) as cofactor. Mn(2+) serves as cofactor.

The enzyme catalyses NAD(+) + (deoxyribonucleotide)n-3'-hydroxyl + 5'-phospho-(deoxyribonucleotide)m = (deoxyribonucleotide)n+m + AMP + beta-nicotinamide D-nucleotide.. DNA ligase that catalyzes the formation of phosphodiester linkages between 5'-phosphoryl and 3'-hydroxyl groups in double-stranded DNA using NAD as a coenzyme and as the energy source for the reaction. It is essential for DNA replication and repair of damaged DNA. The sequence is that of DNA ligase from Caldicellulosiruptor bescii (strain ATCC BAA-1888 / DSM 6725 / KCTC 15123 / Z-1320) (Anaerocellum thermophilum).